Reading from the N-terminus, the 38-residue chain is Cytochrome b559 subunit beta (38 aa).

A helical transmembrane segment spans residues W13–S29. H17 serves as a coordination point for heme.

It belongs to the PsbE/PsbF family. Heterodimer of an alpha subunit and a beta subunit. PSII is composed of 1 copy each of membrane proteins PsbA, PsbB, PsbC, PsbD, PsbE, PsbF, PsbH, PsbI, PsbJ, PsbK, PsbL, PsbM, PsbT, PsbX, PsbY, PsbZ, Psb30/Ycf12, at least 3 peripheral proteins of the oxygen-evolving complex and a large number of cofactors. It forms dimeric complexes. Heme b serves as cofactor.

It localises to the plastid. It is found in the chloroplast thylakoid membrane. In terms of biological role, this b-type cytochrome is tightly associated with the reaction center of photosystem II (PSII). PSII is a light-driven water:plastoquinone oxidoreductase that uses light energy to abstract electrons from H(2)O, generating O(2) and a proton gradient subsequently used for ATP formation. It consists of a core antenna complex that captures photons, and an electron transfer chain that converts photonic excitation into a charge separation. This Ostreococcus tauri protein is Cytochrome b559 subunit beta.